Consider the following 233-residue polypeptide: Preflagellin peptidase (233 aa).

A topological domain (cytoplasmic) is located at residue Met1. The chain crosses the membrane as a helical span at residues 2-18 (IAYAIGLLGLLIASIQD). Residues 19–23 (IKSRE) are Extracellular-facing. The chain crosses the membrane as a helical span at residues 24–46 (IENYIWIGMAVIGLLLSTYLSFT). Residues 47–49 (TGN) lie on the Cytoplasmic side of the membrane. Residues 50 to 72 (FMPIISSISGFIICFIIGYLMFV) traverse the membrane as a helical segment. The Extracellular portion of the chain corresponds to 73–78 (LGIGGA). Residues 79-89 (DGKILMGMGAL) form a helical membrane-spanning segment. Residues 90–110 (IPSYAFPVYSSLQPLYTMEYI) lie on the Cytoplasmic side of the membrane. Residues 111-139 (PWFPLLVFFNGVILMIVLPIYLFFKNLSN) form a helical membrane-spanning segment. Residues 140 to 207 (GVKPKKLKEY…QYVWATPELP (68 aa)) are Extracellular-facing. Residues 208–219 (LLVPIALSYIIT) form a helical membrane-spanning segment. The Cytoplasmic portion of the chain corresponds to 220–233 (PFLGDKILSIILPM).

Belongs to the peptidase A24 family. Archaeal preflagellin peptidase subfamily.

It localises to the cell membrane. The enzyme catalyses Cleaves the signal peptide of 3 to 12 amino acids from the N-terminal of preflagellin, usually at Arg-Gly-|- or Lys-Gly-|-, to release flagellin.. Its function is as follows. Cleaves the N-terminal leader peptide from preflagellins. The processing of preflagellins is necessary for assembly of flagellins into a flagellum structure. The protein is Preflagellin peptidase (flaK) of Methanococcus voltae.